The following is a 1025-amino-acid chain: Interferon-induced helicase C domain-containing protein 1 (1025 aa).

CARD domains lie at 7 to 97 and 110 to 190; these read AEDS…YVKP and AHDE…QTGN. Residues Lys-23 and Lys-43 each participate in a glycyl lysine isopeptide (Lys-Gly) (interchain with G-Cter in ISG15) cross-link. Residues 273 to 297 are disordered; that stretch reads SLGHNSNMGRDSGTMGSDSDESVIQ. Residues 275-297 are compositionally biased toward polar residues; the sequence is GHNSNMGRDSGTMGSDSDESVIQ. Phosphoserine occurs at positions 289, 291, and 302. The Helicase ATP-binding domain maps to 317 to 510; that stretch reads AQPALDGKNI…SEAEKHILNI (194 aa). Residues Ser-645 and Ser-648 each carry the phosphoserine modification. One can recognise a Helicase C-terminal domain in the interval 700–872; sequence KLIKLRNTIL…NMKPEEYAHK (173 aa). Ser-828 is modified (phosphoserine; by RIOK3). The region spanning 893–1020 is the RLR CTR domain; the sequence is AKQYNDNPSL…PDLDYSEYCL (128 aa). Positions 907, 910, 962, and 964 each coordinate Zn(2+).

The protein belongs to the helicase family. RLR subfamily. In terms of assembly, monomer in the absence of ligands and homodimerizes in the presence of dsRNA ligands. Can assemble into helical or linear polymeric filaments on long dsRNA. Interacts with MAVS/IPS1. Interacts (via the CARD domains) with TKFC, the interaction is inhibited by viral infection. Interacts with PCBP2. Interacts with NLRC5. Interacts with PIAS2-beta. Interacts with DDX60. Interacts with ANKRD17. Interacts with IKBKE. Interacts with ATG5 and ATG12, either as ATG5 and ATG12 monomers or as ATG12-ATG5 conjugates. Interacts with ZCCHC3; leading to activate IFIH1/MDA5. Interacts with RNF123. Interacts with DDX3X. Interacts with NOD1; this interaction promotes transcription of antiviral genes and inhibition of viral replication. Interacts with ECSIT; this interaction bridges IFIH1 to the MAVS complex at the mitochondrion. Post-translationally, during apoptosis, processed into 3 cleavage products. The helicase-containing fragment, once liberated from the CARD domains, translocate from the cytoplasm to the nucleus. The processed protein significantly sensitizes cells to DNA degradation. Sumoylated. Sumoylation positively regulates its role in type I interferon induction and is enhanced by PIAS2-beta. In terms of processing, ubiquitinated by RNF125, leading to its degradation by the proteasome. USP17/UPS17L2-dependent deubiquitination positively regulates the receptor. Ubiquitinated by TRIM25 via 'Lys-63'-linked ubiquitination, promoting activation of IFIH1/MDA5. Ubiquitinated by TRIM40 via 'Lys-48'-linked ubiquitination; leading to proteasomal degradation. Ubiquitinated by TRIM65 via 'Lys-63'-linked ubiquitination, promoting activation of IFIH1/MDA5. Post-translationally, ISGylated by ISG15. ISGylation increases upon infection with viruses. ISGylation at Lys-23 and Lys-43 is dependent of dephosphorylation, regulates mitochondrial translocation and oligomerization. Essential for IFIH1/MDA5-mediated cytokine responses and restriction of virus replication. Phosphorylated. Dephosphorylated by phsophatases PP1; dephosphorylation precedes and is required for ISGylation. Expression is prominent in lung, liver, kidney, heart and spleen (at protein level). Widely expressed at low level.

The protein localises to the cytoplasm. It is found in the nucleus. Its subcellular location is the mitochondrion. It catalyses the reaction ATP + H2O = ADP + phosphate + H(+). In terms of biological role, innate immune receptor which acts as a cytoplasmic sensor of viral nucleic acids and plays a major role in sensing viral infection and in the activation of a cascade of antiviral responses including the induction of type I interferons and pro-inflammatory cytokines. Its ligands include mRNA lacking 2'-O-methylation at their 5' cap and long-dsRNA (&gt;1 kb in length). Upon ligand binding it associates with mitochondria antiviral signaling protein (MAVS/IPS1) which activates the IKK-related kinases: TBK1 and IKBKE which phosphorylate interferon regulatory factors: IRF3 and IRF7 which in turn activate transcription of antiviral immunological genes, including interferons (IFNs); IFN-alpha and IFN-beta. Responsible for detecting the Picornaviridae family members such as encephalomyocarditis virus (EMCV), mengo encephalomyocarditis virus (ENMG), and theiler's murine encephalomyelitis virus (TMEV). Can also detect other viruses such as dengue virus (DENV), west Nile virus (WNV), and reovirus. Also involved in antiviral signaling in response to viruses containing a dsDNA genome, such as vaccinia virus. Plays an important role in amplifying innate immune signaling through recognition of RNA metabolites that are produced during virus infection by ribonuclease L (RNase L). May play an important role in enhancing natural killer cell function and may be involved in growth inhibition and apoptosis in several tumor cell lines. The sequence is that of Interferon-induced helicase C domain-containing protein 1 from Mus musculus (Mouse).